The chain runs to 268 residues: WUSCHEL-related homeobox 11 (268 aa).

Residues 1–35 (MDQEQTPHSPTRHSRSPPSSASGSTSAEPVRSRWS) are disordered. Low complexity predominate over residues 16 to 27 (SPPSSASGSTSA). Residues 29–93 (PVRSRWSPKP…NRRSRSRRRQ (65 aa)) constitute a DNA-binding region (homeobox; WUS-type).

It belongs to the WUS homeobox family.

The protein resides in the nucleus. Functionally, transcription factor which may be involved in developmental processes. This Arabidopsis thaliana (Mouse-ear cress) protein is WUSCHEL-related homeobox 11 (WOX11).